Here is a 178-residue protein sequence, read N- to C-terminus: ATP synthase subunit delta (178 aa).

Belongs to the ATPase delta chain family. As to quaternary structure, F-type ATPases have 2 components, F(1) - the catalytic core - and F(0) - the membrane proton channel. F(1) has five subunits: alpha(3), beta(3), gamma(1), delta(1), epsilon(1). F(0) has three main subunits: a(1), b(2) and c(10-14). The alpha and beta chains form an alternating ring which encloses part of the gamma chain. F(1) is attached to F(0) by a central stalk formed by the gamma and epsilon chains, while a peripheral stalk is formed by the delta and b chains.

It localises to the cell membrane. Its function is as follows. F(1)F(0) ATP synthase produces ATP from ADP in the presence of a proton or sodium gradient. F-type ATPases consist of two structural domains, F(1) containing the extramembraneous catalytic core and F(0) containing the membrane proton channel, linked together by a central stalk and a peripheral stalk. During catalysis, ATP synthesis in the catalytic domain of F(1) is coupled via a rotary mechanism of the central stalk subunits to proton translocation. In terms of biological role, this protein is part of the stalk that links CF(0) to CF(1). It either transmits conformational changes from CF(0) to CF(1) or is implicated in proton conduction. This is ATP synthase subunit delta from Desulfitobacterium hafniense (strain Y51).